The following is a 262-amino-acid chain: Adenosylcobinamide-GDP ribazoletransferase (262 aa).

4 consecutive transmembrane segments (helical) span residues 43–63 (PLAG…LGAI), 121–141 (VALI…LPLL), 145–165 (GGGV…VWHW), and 195–215 (GVIL…AVLL).

Belongs to the CobS family. The cofactor is Mg(2+).

The protein resides in the cell inner membrane. The enzyme catalyses alpha-ribazole + adenosylcob(III)inamide-GDP = adenosylcob(III)alamin + GMP + H(+). It catalyses the reaction alpha-ribazole 5'-phosphate + adenosylcob(III)inamide-GDP = adenosylcob(III)alamin 5'-phosphate + GMP + H(+). It functions in the pathway cofactor biosynthesis; adenosylcobalamin biosynthesis; adenosylcobalamin from cob(II)yrinate a,c-diamide: step 7/7. In terms of biological role, joins adenosylcobinamide-GDP and alpha-ribazole to generate adenosylcobalamin (Ado-cobalamin). Also synthesizes adenosylcobalamin 5'-phosphate from adenosylcobinamide-GDP and alpha-ribazole 5'-phosphate. In Sinorhizobium medicae (strain WSM419) (Ensifer medicae), this protein is Adenosylcobinamide-GDP ribazoletransferase.